The following is a 408-amino-acid chain: Pleckstrin homology domain-containing family O member 1 (408 aa).

The interval 1 to 21 is disordered; it reads MKKSGSGKRGPPDGNHQSAAP. The PH domain occupies 20–131; sequence APEKVGWVRK…WINALSSAIT (112 aa). Positions 132 to 192 are interaction with capping proteins (CPs); it reads RAKNRILDEV…MLTLDLIQEE (61 aa). The interval 135–307 is interaction with ATM, CKIP, IFP35 and NMI; sequence NRILDEVTVE…PAQPGQLSRI (173 aa). Residues 217 to 264 form a disordered region; that stretch reads LAGSRRRADSDRIQPSSQRASSLSRPWEKPDKGAPYTPQALKKFPSTE. At Ser-226 the chain carries Phosphoserine. Positions 229-240 are enriched in polar residues; the sequence is IQPSSQRASSLS. 2 positions are modified to phosphoserine: Ser-270 and Ser-341. A negative regulator of AP-1 activity region spans residues 307-408; the sequence is IQDLVARKLE…QHSQYRKSLM (102 aa). Disordered regions lie at residues 325–348 and 389–408; these read VQGLGDGKRKAKDPPQSPPDSESE and TPDSHLRQTSQHSQYRKSLM. Polar residues predominate over residues 389-401; that stretch reads TPDSHLRQTSQHS.

As to quaternary structure, heterodimer or homodimer. Interacts with CK2 and actin capping subunits (capping protein CP-alpha and CP-beta). CKIP1 and CK2 together inhibit the activity of actin capping protein at the barbed ends of actin filaments. Interacts with ATM, IFP35, JUN, JUND, NMI and PI3K. Interacts with AKT1, AKT2 and AKT3 (each isozyme of PKB), PtdIns(3,5)P2, PtdIns(4,5)P2 and PtdIns(3,4,5)P2. C-terminal fragments could be released during apoptosis via caspase-3-dependent cleavage.

The protein resides in the cell membrane. The protein localises to the nucleus. It is found in the cytoplasm. In terms of biological role, plays a role in the regulation of the actin cytoskeleton through its interactions with actin capping protein (CP). May function to target CK2 to the plasma membrane thereby serving as an adapter to facilitate the phosphorylation of CP by protein kinase 2 (CK2). Appears to target ATM to the plasma membrane. Appears to also inhibit tumor cell growth by inhibiting AKT-mediated cell-survival. Also implicated in PI3K-regulated muscle differentiation, the regulation of AP-1 activity (plasma membrane bound AP-1 regulator that translocates to the nucleus) and the promotion of apoptosis induced by tumor necrosis factor TNF. When bound to PKB, it inhibits it probably by decreasing PKB level of phosphorylation. This chain is Pleckstrin homology domain-containing family O member 1 (Plekho1), found in Mus musculus (Mouse).